Consider the following 273-residue polypeptide: ATP synthase subunit a (273 aa).

Helical transmembrane passes span 42 to 62 (TLNIDSLFFSVVLGALFLFIF), 102 to 122 (VIAPLALTVFVWVFLMNMMDL), 148 to 168 (DVSITLSMALGVFILILFYSI), 213 to 233 (LFGNMYAGELIFILIAGLLPW), and 244 to 264 (AIFHILIITLQAFIFMVLTIV).

Belongs to the ATPase A chain family. In terms of assembly, F-type ATPases have 2 components, CF(1) - the catalytic core - and CF(0) - the membrane proton channel. CF(1) has five subunits: alpha(3), beta(3), gamma(1), delta(1), epsilon(1). CF(0) has three main subunits: a(1), b(2) and c(9-12). The alpha and beta chains form an alternating ring which encloses part of the gamma chain. CF(1) is attached to CF(0) by a central stalk formed by the gamma and epsilon chains, while a peripheral stalk is formed by the delta and b chains.

The protein localises to the cell inner membrane. Functionally, key component of the proton channel; it plays a direct role in the translocation of protons across the membrane. The sequence is that of ATP synthase subunit a from Serratia proteamaculans (strain 568).